The primary structure comprises 661 residues: Galactan 5-O-arabinofuranosyltransferase (661 aa).

Transmembrane regions (helical) follow at residues 26 to 46 (LVAI…LWMG), 64 to 84 (VASA…WLWL), 108 to 128 (ALTY…VLAI), 194 to 214 (AFQP…VPVW), 217 to 237 (ITGS…IILA), 243 to 263 (PYAA…SRIA), 265 to 285 (GDKF…TFYT), 286 to 306 (LFTG…AAIV), 312 to 332 (PLLW…ISWG), 362 to 382 (VPFL…IYLV), 393 to 413 (MWVG…ITLL), 418 to 438 (LGFR…VLGI), and 458 to 478 (TATH…LYYA).

This sequence belongs to the glycosyltransferase 85 family.

The protein localises to the cell membrane. It carries out the reaction Adds an alpha-D-arabinofuranosyl group from trans,octacis-decaprenylphospho-beta-D-arabinofuranose at the 5-O-position of the eighth, tenth and twelfth galactofuranose unit of the galactofuranan chain of [beta-D-galactofuranosyl-(1-&gt;5)-beta-D-galactofuranosyl-(1-&gt;6)]14-beta-D-galactofuranosyl-(1-&gt;5)-beta-D-galactofuranosyl-(1-&gt;4)-alpha-L-rhamnopyranosyl-(1-&gt;3)-N-acetyl-alpha-D-glucosaminyl-diphospho-trans,octacis-decaprenol.. It functions in the pathway cell wall biogenesis; cell wall polysaccharide biosynthesis. Functionally, involved in the biosynthesis of the arabinogalactan (AG) region of the mycolylarabinogalactan-peptidoglycan (mAGP) complex, an essential component of the cell wall. Catalyzes the addition of the first key arabinofuranosyl (Araf) residue from the sugar donor decaprenyl-phospho-arabinose (DPA) on the C-5 of a 6-linked galactofuranosyl (Galf) of the galactan domain, thus 'priming' the galactan for further elaboration by other arabinofuranosyltransferases. This chain is Galactan 5-O-arabinofuranosyltransferase, found in Corynebacterium glutamicum (strain ATCC 13032 / DSM 20300 / JCM 1318 / BCRC 11384 / CCUG 27702 / LMG 3730 / NBRC 12168 / NCIMB 10025 / NRRL B-2784 / 534).